The sequence spans 910 residues: Protein kinase 3 (910 aa).

Gly residues predominate over residues 119–129 (SPSGGGGGGSG). Disordered regions lie at residues 119–239 (SPSG…PNLI), 270–295 (FNNN…KTPT), and 391–454 (NKDD…NDKK). Low complexity-rich tracts occupy residues 130 to 160 (VSSN…QPTS), 169 to 196 (LSES…QSTS), 209 to 220 (GLSGSSTSSSSA), 227 to 239 (NNNA…PNLI), 270 to 290 (FNNN…TTST), and 422 to 450 (INQP…TSQT). In terms of domain architecture, Protein kinase spans 498–763 (FELLKVLGVG…FEEISSHPFF (266 aa)). ATP contacts are provided by residues 504 to 512 (LGVGSFGRV) and lysine 527. Aspartate 621 acts as the Proton acceptor in catalysis. Threonine 664 is subject to Phosphothreonine; by autocatalysis. In terms of domain architecture, AGC-kinase C-terminal spans 764–854 (ELIPWRMLES…NKEEEDGIMG (91 aa)). Disordered stretches follow at residues 786–812 (EISL…TLSC) and 859–910 (IGSI…KGSV). Composition is skewed to low complexity over residues 788–809 (SLPN…NNLT) and 859–886 (IGSI…SGGS).

It belongs to the protein kinase superfamily. AGC Ser/Thr protein kinase family.

It catalyses the reaction L-seryl-[protein] + ATP = O-phospho-L-seryl-[protein] + ADP + H(+). The enzyme catalyses L-threonyl-[protein] + ATP = O-phospho-L-threonyl-[protein] + ADP + H(+). The protein is Protein kinase 3 (pkgC) of Dictyostelium discoideum (Social amoeba).